A 345-amino-acid chain; its full sequence is MSITPQEALTRCIEHREIFHDEMLHLMRLIMRGEMSPVMAAALTMGLRVKKETIGEIAAAATVMREFATKVDVPAEVSDHFVDIVGTGGDGANTFNISTASMFVAAAAGARIAKHGGRGVSSKSGSADVLEALGVNIMLTPEQVAESIETAGIGFMFAPNHHPAMKNVAPIRKELGVRTIFNILGPLTNPAGAPNILMGVFHPDLVGIQVRVMQRLGAKHAVVVYGKDGMDEVSLGAATLVGELKDGVVTEYEIHPEDFGLQMVSNRSLKVADADESKAMLIEALENKPGTPREIVSLNAGAALYAANIAGSIGDGMKLAREAIASGAARAKLDELVRVTNQFKA.

Residues glycine 86, glycine 89–aspartate 90, threonine 94, asparagine 96–threonine 99, lysine 114–serine 122, and serine 126 contribute to the 5-phospho-alpha-D-ribose 1-diphosphate site. Glycine 86 is a binding site for anthranilate. Serine 98 contacts Mg(2+). Anthranilate is bound at residue arginine 172. 2 residues coordinate Mg(2+): aspartate 231 and glutamate 232.

It belongs to the anthranilate phosphoribosyltransferase family. Homodimer. Mg(2+) serves as cofactor.

The enzyme catalyses N-(5-phospho-beta-D-ribosyl)anthranilate + diphosphate = 5-phospho-alpha-D-ribose 1-diphosphate + anthranilate. The protein operates within amino-acid biosynthesis; L-tryptophan biosynthesis; L-tryptophan from chorismate: step 2/5. Catalyzes the transfer of the phosphoribosyl group of 5-phosphorylribose-1-pyrophosphate (PRPP) to anthranilate to yield N-(5'-phosphoribosyl)-anthranilate (PRA). The protein is Anthranilate phosphoribosyltransferase of Ralstonia pickettii (strain 12J).